Reading from the N-terminus, the 123-residue chain is Galectin-2 (123 aa).

Residues 4–123 (KVEIMNMDMK…LRYLSVQGGF (120 aa)) enclose the Galectin domain. 65 to 71 (WGKEQRD) serves as a coordination point for a beta-D-galactoside.

Homodimer.

This protein binds beta-galactoside. Its physiological function is not yet known. This is Galectin-2 (LGALS2) from Sus scrofa (Pig).